The primary structure comprises 187 residues: MNETQIQRETRQVVEDVLEKTNLKQGALFVLGLSSSEVLGGHIGKESSQEIGELIVETILDILGSRGIHLAVQGCEHVNRALVVERQVAEQFGLEIVSVHPTLHAGGSGQLAAFKFMQDPVEVEFIKAHAGLDIGDTAIGMHVKHVQVPIRPILREIGHAHVTALASRPKLIGGARAHYPQDAIRKT.

The protein belongs to the UPF0340 family.

The chain is UPF0340 protein SPN23F05980 from Streptococcus pneumoniae (strain ATCC 700669 / Spain 23F-1).